We begin with the raw amino-acid sequence, 396 residues long: L-lactate dehydrogenase (396 aa).

Positions 1–380 (MIISAASDYR…SRDSLVQELG (380 aa)) constitute an FMN hydroxy acid dehydrogenase domain. Tyr24 contacts substrate. Residues Ser106 and Gln127 each contribute to the FMN site. Tyr129 provides a ligand contact to substrate. Thr155 contributes to the FMN binding site. Arg164 provides a ligand contact to substrate. Lys251 contacts FMN. The active-site Proton acceptor is the His275. Residue Arg278 participates in substrate binding. 306–330 (DSGIRNGLDVVRMIALGADSVLLGR) contributes to the FMN binding site.

This sequence belongs to the FMN-dependent alpha-hydroxy acid dehydrogenase family. It depends on FMN as a cofactor.

The protein resides in the cell inner membrane. The enzyme catalyses (S)-lactate + A = pyruvate + AH2. Its function is as follows. Catalyzes the conversion of L-lactate to pyruvate. Is coupled to the respiratory chain. In Citrobacter koseri (strain ATCC BAA-895 / CDC 4225-83 / SGSC4696), this protein is L-lactate dehydrogenase.